We begin with the raw amino-acid sequence, 197 residues long: MSARAPKELRLALPPCLLNRTFASPNASGSGNTGARGPGAVGSGTCITQVGQQLFQSFSSTLVLIVLVTLIFCLIVLSLSTFHIHKRRMKKRKMQRAQEEYERDHCSGSRGGGGLPRPGRQAPTHAKETRLERQPRDSPFCAPSNASSLSSSSPGLPCQGPCAPPPPPPASSPQGAHAASSCLDTAGEGLLQTVVLS.

Residues 1–23 (MSARAPKELRLALPPCLLNRTFA) form the signal peptide. At 24 to 61 (SPNASGSGNTGARGPGAVGSGTCITQVGQQLFQSFSST) the chain is on the extracellular side. A glycan (N-linked (GlcNAc...) asparagine) is linked at N26. Residues 62 to 82 (LVLIVLVTLIFCLIVLSLSTF) form a helical membrane-spanning segment. Residues 83–197 (HIHKRRMKKR…EGLLQTVVLS (115 aa)) are Cytoplasmic-facing. The tract at residues 94-180 (MQRAQEEYER…SSPQGAHAAS (87 aa)) is disordered. Basic and acidic residues-rich tracts occupy residues 96 to 107 (RAQEEYERDHCS) and 125 to 136 (HAKETRLERQPR). The segment covering 141 to 161 (CAPSNASSLSSSSPGLPCQGP) has biased composition (low complexity). Over residues 162 to 171 (CAPPPPPPAS) the composition is skewed to pro residues.

It is found in the membrane. This is an uncharacterized protein from Homo sapiens (Human).